A 773-amino-acid chain; its full sequence is Transducin-like enhancer protein 4 (773 aa).

Disordered regions lie at residues methionine 1–glutamine 22, histidine 140–proline 162, and leucine 182–alanine 357. The segment at methionine 1–glutamine 136 is q domain. Positions histidine 137–serine 204 are GP domain. The segment covering proline 183–isoleucine 202 has biased composition (basic and acidic residues). Low complexity predominate over residues lysine 203–arginine 214. Residues serine 205 to proline 274 form a ccN domain region. Phosphoserine is present on residues serine 208, serine 212, serine 216, and serine 222. Positions glycine 215–aspartate 252 are enriched in basic and acidic residues. Lysine 237 is modified (N6-acetyllysine). Serine 245 is subject to Phosphoserine. Phosphoserine; by CK2 is present on serine 250. At serine 265 the chain carries Phosphoserine; by CDK1. 2 positions are modified to phosphoserine: serine 269 and serine 273. Positions serine 273–alanine 289 are enriched in basic and acidic residues. Residues arginine 275–histidine 452 are SP domain. Residue lysine 281 is modified to N6-acetyllysine. The segment covering proline 290–serine 305 has biased composition (low complexity). Serine 292 carries the phosphoserine modification. Residues threonine 317 to proline 328 are compositionally biased toward polar residues. Residue threonine 318 is modified to Phosphothreonine. Phosphoserine occurs at positions 321 and 323. Phosphothreonine occurs at positions 325, 327, 334, and 340. Phosphoserine is present on serine 419. WD repeat units follow at residues asparagine 485–proline 523, asparagine 531–lysine 570, serine 575–glutamine 614, glycine 617–glutamine 656, aspartate 658–leucine 697, leucine 699–glutamine 738, and lysine 740–tyrosine 773.

The protein belongs to the WD repeat Groucho/TLE family. In terms of assembly, homooligomer and heterooligomer with other family members. Interacts with PAX5. Interacts with LEF1, TCF7, TCF7L1 and TCF7L2. Interacts with ZNF703; TLE4 may mediate ZNF703 transcriptional repression. Interacts with SIX3 and SIX6. Interacts with PAX2. Interacts with TLE1. Phosphorylated. PAX5 binding increases phosphorylation. Post-translationally, ubiquitinated by XIAP/BIRC4. As to expression, expressed in bone marrow-derived macrophages.

It is found in the nucleus. In terms of biological role, transcriptional corepressor that binds to a number of transcription factors. Inhibits the transcriptional activation mediated by PAX5, and by CTNNB1 and TCF family members in Wnt signaling. The effects of full-length TLE family members may be modulated by association with dominant-negative AES. Essential for the transcriptional repressor activity of SIX3 during retina and lens development and for SIX3 transcriptional auto-repression. Involved in transcriptional repression of GNRHR and enhances MSX1-mediated transcriptional repression of CGA/alpha-GSU. This chain is Transducin-like enhancer protein 4 (Tle4), found in Mus musculus (Mouse).